A 466-amino-acid polypeptide reads, in one-letter code: Asparagine--tRNA ligase (466 aa).

This sequence belongs to the class-II aminoacyl-tRNA synthetase family. In terms of assembly, homodimer.

It localises to the cytoplasm. The catalysed reaction is tRNA(Asn) + L-asparagine + ATP = L-asparaginyl-tRNA(Asn) + AMP + diphosphate + H(+). The polypeptide is Asparagine--tRNA ligase (Shewanella baltica (strain OS155 / ATCC BAA-1091)).